Reading from the N-terminus, the 305-residue chain is Sulfate adenylyltransferase subunit 2 (305 aa).

Belongs to the PAPS reductase family. CysD subfamily. Heterodimer composed of CysD, the smaller subunit, and CysN.

It catalyses the reaction sulfate + ATP + H(+) = adenosine 5'-phosphosulfate + diphosphate. It participates in sulfur metabolism; hydrogen sulfide biosynthesis; sulfite from sulfate: step 1/3. With CysN forms the ATP sulfurylase (ATPS) that catalyzes the adenylation of sulfate producing adenosine 5'-phosphosulfate (APS) and diphosphate, the first enzymatic step in sulfur assimilation pathway. APS synthesis involves the formation of a high-energy phosphoric-sulfuric acid anhydride bond driven by GTP hydrolysis by CysN coupled to ATP hydrolysis by CysD. In Pseudomonas syringae pv. tomato (strain ATCC BAA-871 / DC3000), this protein is Sulfate adenylyltransferase subunit 2.